The chain runs to 185 residues: Peptide deformylase (185 aa).

2 residues coordinate Fe cation: Cys-98 and His-140. The active site involves Glu-141. His-144 provides a ligand contact to Fe cation.

The protein belongs to the polypeptide deformylase family. Fe(2+) is required as a cofactor.

It carries out the reaction N-terminal N-formyl-L-methionyl-[peptide] + H2O = N-terminal L-methionyl-[peptide] + formate. Functionally, removes the formyl group from the N-terminal Met of newly synthesized proteins. Requires at least a dipeptide for an efficient rate of reaction. N-terminal L-methionine is a prerequisite for activity but the enzyme has broad specificity at other positions. The chain is Peptide deformylase from Parabacteroides distasonis (strain ATCC 8503 / DSM 20701 / CIP 104284 / JCM 5825 / NCTC 11152).